We begin with the raw amino-acid sequence, 861 residues long: MARYNPKDTEPKWREAWAKADVFKTGEINDGRPKYYVLEMFPYPSGRIHMGHVRNYAMGDVVARYKRAQGFNVLHPMGWDAFGMPAENAAMERGVHPKGWTYDNIAAMREQLKSLGISVDWSREFATCDPEYYGKQQAWFLRLLKRGLVYRKEASVNWDPVDMTVLANEQVIDGKGWRSGAVVEKRKLTQWFLRITDYADALIDGLKTLDRWPDKVRLMQENWIGRSKGLRFKFQFDGEAPDGMAEGLEVYTTRPDTLFGASFVGIAPEHPLAEQLAAANPQIQTFIADCRKGGTSEAEIESAEKLGYDTGLRVKHPLDPSITLPVWIANFILMDYGTGAIFACPAHDQRDLDFARKYDLPVLPVVLPNGEDPATFTVGKEAYVGPGKIFNSKFLDGLDVEAAKAEAIARIEAANQGQGATVYRLRDWGVSRQRYWGCPIPVIHCEACGVVPVPEDQLPVALPDDVTFDKPGNPLLRHPTWRHTTCPSCGGKAERETDTLDTFIDSSWYFARFADTQAAEPVGKDAADHWLPVDQYIGGVEHAILHLLYARFITRALKDEGLLSVEEPFAGLFTQGMVTHEAYKNEAGEWVEPSDVVITTEGSTRTAKHAKTGAPIIIGDIEKMSKSKKNVVAPEDIFEAYGVDSARLFVMSDSPPERDVQWTNSGVEGSWRFTHRLWNEFDSQPAGDFAHDDSDEAALALRKAAHKLIGFVTDSIEGFRFNSGVARLYEFLNALKAAPAEGASQAVLAARAEALNILARLVAPFTPHLAEEAWARMGGEGMVVDAPWPKADPALAADDERVLPIQINGKRRGEIKVKAGAPDDEVTKIALADPNVMAHLEGLTVRKVIVVKDRIVNIVAN.

Positions 42-52 (PYPSGRIHMGH) match the 'HIGH' region motif. Positions 623–627 (KMSKS) match the 'KMSKS' region motif. Residue K626 participates in ATP binding.

It belongs to the class-I aminoacyl-tRNA synthetase family.

The protein localises to the cytoplasm. The enzyme catalyses tRNA(Leu) + L-leucine + ATP = L-leucyl-tRNA(Leu) + AMP + diphosphate. This is Leucine--tRNA ligase from Caulobacter vibrioides (strain ATCC 19089 / CIP 103742 / CB 15) (Caulobacter crescentus).